A 424-amino-acid chain; its full sequence is Arogenate dehydratase 4, chloroplastic (424 aa).

The N-terminal 34 residues, M1–T34, are a transit peptide targeting the chloroplast. A Prephenate dehydratase domain is found at R126–R303. An ACT domain is found at V319 to P410.

In terms of tissue distribution, expressed in roots, leaves, stems, flowers and siliques. More abundant in stems and roots.

The protein resides in the plastid. Its subcellular location is the chloroplast stroma. The enzyme catalyses L-arogenate + H(+) = L-phenylalanine + CO2 + H2O. The protein operates within amino-acid biosynthesis; L-phenylalanine biosynthesis; L-phenylalanine from L-arogenate: step 1/1. In terms of biological role, converts the prephenate produced from the shikimate-chorismate pathway into phenylalanine. This Arabidopsis thaliana (Mouse-ear cress) protein is Arogenate dehydratase 4, chloroplastic.